A 135-amino-acid polypeptide reads, in one-letter code: S-adenosylmethionine decarboxylase proenzyme (135 aa).

The Schiff-base intermediate with substrate; via pyruvic acid role is filled by Ser-64. Pyruvic acid (Ser); by autocatalysis is present on Ser-64. The active-site Proton acceptor; for processing activity is the His-69. The active-site Proton donor; for catalytic activity is Cys-84.

Belongs to the prokaryotic AdoMetDC family. Type 1 subfamily. As to quaternary structure, heterotetramer of two alpha and two beta chains arranged as a dimer of alpha/beta heterodimers. Requires pyruvate as cofactor. Post-translationally, is synthesized initially as an inactive proenzyme. Formation of the active enzyme involves a self-maturation process in which the active site pyruvoyl group is generated from an internal serine residue via an autocatalytic post-translational modification. Two non-identical subunits are generated from the proenzyme in this reaction, and the pyruvate is formed at the N-terminus of the alpha chain, which is derived from the carboxyl end of the proenzyme. The post-translation cleavage follows an unusual pathway, termed non-hydrolytic serinolysis, in which the side chain hydroxyl group of the serine supplies its oxygen atom to form the C-terminus of the beta chain, while the remainder of the serine residue undergoes an oxidative deamination to produce ammonia and the pyruvoyl group blocking the N-terminus of the alpha chain.

It carries out the reaction S-adenosyl-L-methionine + H(+) = S-adenosyl 3-(methylsulfanyl)propylamine + CO2. It functions in the pathway amine and polyamine biosynthesis; S-adenosylmethioninamine biosynthesis; S-adenosylmethioninamine from S-adenosyl-L-methionine: step 1/1. Functionally, catalyzes the decarboxylation of S-adenosylmethionine to S-adenosylmethioninamine (dcAdoMet), the propylamine donor required for the synthesis of the polyamines spermine and spermidine from the diamine putrescine. This Aquifex aeolicus (strain VF5) protein is S-adenosylmethionine decarboxylase proenzyme.